The primary structure comprises 494 residues: Ubiquitin carboxyl-terminal hydrolase 14 (494 aa).

Residues 4-80 form the Ubiquitin-like domain; it reads YSVTVKWGKE…MMGSADALPE (77 aa). A Phosphothreonine modification is found at T52. Residues 105–483 form the USP domain; the sequence is CGLTNLGNTC…IAYVLLYGPR (379 aa). C114 functions as the Nucleophile in the catalytic mechanism. A phosphoserine mark is found at S143 and S148. T235 carries the phosphothreonine modification. Phosphoserine occurs at positions 237, 302, and 432. H435 functions as the Proton acceptor in the catalytic mechanism. Residue K449 is modified to N6-acetyllysine.

The protein belongs to the peptidase C19 family. USP14/UBP6 subfamily. In terms of assembly, homodimer (Potential). Associates with the 26S proteasome. Interacts with FANCC, CXCR4 and ERN1. Interacts with TRIM14; this interaction recruits USP14 to cleave ubiquitin chains of CGAS and KDM4D.

Its subcellular location is the cytoplasm. It localises to the cell membrane. It catalyses the reaction Thiol-dependent hydrolysis of ester, thioester, amide, peptide and isopeptide bonds formed by the C-terminal Gly of ubiquitin (a 76-residue protein attached to proteins as an intracellular targeting signal).. Proteasome-associated deubiquitinase which releases ubiquitin from the proteasome targeted ubiquitinated proteins. Ensures the regeneration of ubiquitin at the proteasome. Is a reversibly associated subunit of the proteasome and a large fraction of proteasome-free protein exists within the cell. Required for the degradation of the chemokine receptor CXCR4 which is critical for CXCL12-induced cell chemotaxis. Also serves as a physiological inhibitor of endoplasmic reticulum-associated degradation (ERAD) under the non-stressed condition by inhibiting the degradation of unfolded endoplasmic reticulum proteins via interaction with ERN1. Indispensable for synaptic development and function at neuromuscular junctions (NMJs). Plays a role in the innate immune defense against viruses by stabilizing the viral DNA sensor CGAS and thus inhibiting its autophagic degradation. Inhibits OPTN-mediated selective autophagic degradation of KDM4D and thereby negatively regulates H3K9me2 and H3K9me3. The protein is Ubiquitin carboxyl-terminal hydrolase 14 (USP14) of Homo sapiens (Human).